Reading from the N-terminus, the 257-residue chain is Flavodoxin/ferredoxin--NADP reductase (257 aa).

The FAD-binding FR-type domain maps to 2–110; sequence NPWINANVLK…EKSFGFFTLD (109 aa). Residues 59 to 62, Tyr-75, 83 to 85, and Thr-125 contribute to the FAD site; these read RAYS and KLS. NADP(+) contacts are provided by residues 152–153, 182–183, Arg-193, 223–225, and Asp-229; these read VR, SR, and NPA. 256–257 serves as a coordination point for FAD; that stretch reads YW.

This sequence belongs to the ferredoxin--NADP reductase type 1 family. The cofactor is FAD.

The protein resides in the cytoplasm. The enzyme catalyses 2 reduced [2Fe-2S]-[ferredoxin] + NADP(+) + H(+) = 2 oxidized [2Fe-2S]-[ferredoxin] + NADPH. It catalyses the reaction reduced [flavodoxin] + NADP(+) = oxidized [flavodoxin] + NADPH + 2 H(+). In terms of biological role, transports electrons between flavodoxin or ferredoxin and NADPH. This Buchnera aphidicola subsp. Schizaphis graminum (strain Sg) protein is Flavodoxin/ferredoxin--NADP reductase (fpr).